The sequence spans 202 residues: ATP-dependent Clp protease proteolytic subunit (202 aa).

Catalysis depends on S106, which acts as the Nucleophile. The active site involves H131.

The protein belongs to the peptidase S14 family. In terms of assembly, fourteen ClpP subunits assemble into 2 heptameric rings which stack back to back to give a disk-like structure with a central cavity, resembling the structure of eukaryotic proteasomes.

It is found in the cytoplasm. The catalysed reaction is Hydrolysis of proteins to small peptides in the presence of ATP and magnesium. alpha-casein is the usual test substrate. In the absence of ATP, only oligopeptides shorter than five residues are hydrolyzed (such as succinyl-Leu-Tyr-|-NHMec, and Leu-Tyr-Leu-|-Tyr-Trp, in which cleavage of the -Tyr-|-Leu- and -Tyr-|-Trp bonds also occurs).. Cleaves peptides in various proteins in a process that requires ATP hydrolysis. Has a chymotrypsin-like activity. Plays a major role in the degradation of misfolded proteins. This chain is ATP-dependent Clp protease proteolytic subunit, found in Shewanella sp. (strain MR-7).